A 129-amino-acid polypeptide reads, in one-letter code: MYKTGILNSDISKLLSDLGHTDEIMIADCGLPIPNGVKKIDLALDFGKPSFLDVFHIVKSHMAIEKMTLASEMKTENESLYNVLKEEEIKFTTESHELLKQHSKHVKAIIRTGEAKPYANVILASDVLF.

His20 (proton donor) is an active-site residue. Substrate contacts are provided by residues Asp28, His96, and 118-120; that span reads YAN.

This sequence belongs to the RbsD / FucU family. RbsD subfamily. As to quaternary structure, homodecamer.

Its subcellular location is the cytoplasm. The catalysed reaction is beta-D-ribopyranose = beta-D-ribofuranose. It functions in the pathway carbohydrate metabolism; D-ribose degradation; D-ribose 5-phosphate from beta-D-ribopyranose: step 1/2. In terms of biological role, catalyzes the interconversion of beta-pyran and beta-furan forms of D-ribose. In Staphylococcus saprophyticus subsp. saprophyticus (strain ATCC 15305 / DSM 20229 / NCIMB 8711 / NCTC 7292 / S-41), this protein is D-ribose pyranase.